The primary structure comprises 5207 residues: E3 ubiquitin-protein ligase RNF213 (5207 aa).

Disordered stretches follow at residues 1 to 20 and 27 to 365; these read MECP…FCSQ and PAAP…EADV. Over residues 34-43 the composition is skewed to polar residues; the sequence is SENNNSTMAS. Basic residues predominate over residues 89-100; that stretch reads KKKKRKKKKKGN. Low complexity-rich tracts occupy residues 101 to 117 and 136 to 157; these read KSAS…PASP and SQAQ…ATTP. Polar residues predominate over residues 188-197; the sequence is SEAQSSPQFQ. Phosphoserine occurs at positions 208 and 217. Polar residues predominate over residues 248–266; sequence GGSSEPGTELQTTEQQAGA. 3 stretches are compositionally biased toward basic and acidic residues: residues 285-294, 309-346, and 353-362; these read AGKEMKEKTQ, HCQE…EGKN, and KNEKEQKNQE. Residues 343–374 are a coiled coil; that stretch reads EGKNRSAAAVKNEKEQKNQEADVQEVKASTLS. K1151 is covalently cross-linked (Glycyl lysine isopeptide (Lys-Gly) (interchain with G-Cter in SUMO2)). S1258 bears the Phosphoserine mark. Residues 1995–2000, E2098, D2155, and R2216 each bind ATP; that span reads GVGKSL. S2273 is modified (phosphoserine). ATP contacts are provided by K2499 and S2574. Zn(2+) is bound by residues C3997, C4000, C4012, H4014, C4017, C4020, C4032, C4035, C4505, and H4509. The RING-type zinc-finger motif lies at 3997–4036; it reads CSICLGDAKDPVCLPCDHVHCLRCLRAWFASEQMICPYCL. The RZ-type zinc-finger motif lies at 4483–4555; that stretch reads MPEDLLAQAR…VKDKADRTQT (73 aa). C4516 acts as the Nucleophile; for E3 ubiquitin-lipopolysaccharide ligase activity in catalysis. Zn(2+) contacts are provided by C4525 and C4528.

The protein belongs to the AAA ATPase family. Monomer. Interacts with UBE2L3/UBCH7; UBE2L3/UBCH7 is the most efficient ubiquitin-conjugating enzyme E2 for the ubiquitin ligase activity. Interacts with UBE2N/UBC13; promoting 'Lys-63'-linked ubiquitination of target proteins. As to quaternary structure, (Microbial infection) Interacts with M.tuberculosis protein Rv3655c, which impairs caspase-8 activation and suppresses macrophage apoptosis by blocking the extrinsic pathway. Autoubiquitinated. Widely expressed (at protein level). As to expression, major isoform detected in all tissues examined. In terms of tissue distribution, minor isoform with restricted expression.

The protein resides in the cytoplasm. It is found in the cytosol. It localises to the lipid droplet. It catalyses the reaction S-ubiquitinyl-[E2 ubiquitin-conjugating enzyme]-L-cysteine + [acceptor protein]-L-lysine = [E2 ubiquitin-conjugating enzyme]-L-cysteine + N(6)-ubiquitinyl-[acceptor protein]-L-lysine.. The catalysed reaction is ATP + H2O = ADP + phosphate + H(+). The protein operates within protein modification; protein ubiquitination. Functionally, atypical E3 ubiquitin ligase that can catalyze ubiquitination of both proteins and lipids, and which is involved in various processes, such as lipid metabolism, angiogenesis and cell-autonomous immunity. Acts as a key immune sensor by catalyzing ubiquitination of the lipid A moiety of bacterial lipopolysaccharide (LPS) via its RZ-type zinc-finger: restricts the proliferation of cytosolic bacteria, such as Salmonella, by generating the bacterial ubiquitin coat through the ubiquitination of LPS. Also acts indirectly by mediating the recruitment of the LUBAC complex, which conjugates linear polyubiquitin chains. Ubiquitination of LPS triggers cell-autonomous immunity, such as antibacterial autophagy, leading to degradation of the microbial invader. Involved in lipid metabolism by regulating fat storage and lipid droplet formation; act by inhibiting the lipolytic process. Also regulates lipotoxicity by inhibiting desaturation of fatty acids. Also acts as an E3 ubiquitin-protein ligase via its RING-type zinc finger: mediates 'Lys-63'-linked ubiquitination of target proteins. Involved in the non-canonical Wnt signaling pathway in vascular development: acts by mediating ubiquitination and degradation of FLNA and NFATC2 downstream of RSPO3, leading to inhibit the non-canonical Wnt signaling pathway and promoting vessel regression. Also has ATPase activity; ATPase activity is required for ubiquitination of LPS. This Homo sapiens (Human) protein is E3 ubiquitin-protein ligase RNF213.